Reading from the N-terminus, the 268-residue chain is Small ribosomal subunit protein uS2 (268 aa).

A disordered region spans residues 233 to 268 (SVREEEFAEAAAEGEEKPARRAPAKKAAKKGDDAQA).

This sequence belongs to the universal ribosomal protein uS2 family.

The sequence is that of Small ribosomal subunit protein uS2 from Stenotrophomonas maltophilia (strain K279a).